A 165-amino-acid polypeptide reads, in one-letter code: Nucleotide-binding protein P9215_05621 (165 aa).

This sequence belongs to the YajQ family.

Its function is as follows. Nucleotide-binding protein. This Prochlorococcus marinus (strain MIT 9215) protein is Nucleotide-binding protein P9215_05621.